The primary structure comprises 493 residues: ATP synthase subunit beta 3 (493 aa).

The tract at residues 113 to 138 is disordered; that stretch reads VPGDNGTPLPPGTPRRPIHRKPPPLA. Residue 170-177 participates in ATP binding; it reads GGAGVGKT.

This sequence belongs to the ATPase alpha/beta chains family. F-type ATPases have 2 components, CF(1) - the catalytic core - and CF(0) - the membrane proton channel. CF(1) has five subunits: alpha(3), beta(3), gamma(1), delta(1), epsilon(1). CF(0) has three main subunits: a(1), b(2) and c(9-12). The alpha and beta chains form an alternating ring which encloses part of the gamma chain. CF(1) is attached to CF(0) by a central stalk formed by the gamma and epsilon chains, while a peripheral stalk is formed by the delta and b chains.

The protein resides in the cell inner membrane. It carries out the reaction ATP + H2O + 4 H(+)(in) = ADP + phosphate + 5 H(+)(out). Functionally, produces ATP from ADP in the presence of a proton gradient across the membrane. The catalytic sites are hosted primarily by the beta subunits. This chain is ATP synthase subunit beta 3, found in Paraburkholderia xenovorans (strain LB400).